The following is a 494-amino-acid chain: 4-trimethylaminobutyraldehyde dehydrogenase (494 aa).

The residue at position 2 (S2) is an N-acetylserine. Position 30 is an N6-acetyllysine; alternate (K30). The residue at position 30 (K30) is an N6-succinyllysine; alternate. At K59 the chain carries N6-succinyllysine. NAD(+) is bound by residues K180 and 232-236 (GSVPT). E254 functions as the Proton acceptor in the catalytic mechanism. The active-site Nucleophile is the C288. K298 carries the N6-acetyllysine modification. At K303 the chain carries N6-acetyllysine; alternate. K303 bears the N6-succinyllysine; alternate mark. The residue at position 344 (K344) is an N6-acetyllysine. Residue E391 participates in NAD(+) binding.

It belongs to the aldehyde dehydrogenase family. In terms of assembly, homotetramer.

It is found in the cytoplasm. The protein resides in the cytosol. The enzyme catalyses 4-(trimethylamino)butanal + NAD(+) + H2O = 4-(trimethylamino)butanoate + NADH + 2 H(+). It catalyses the reaction an aldehyde + NAD(+) + H2O = a carboxylate + NADH + 2 H(+). The catalysed reaction is 4-aminobutanal + NAD(+) + H2O = 4-aminobutanoate + NADH + 2 H(+). It carries out the reaction formaldehyde + NAD(+) + H2O = formate + NADH + 2 H(+). The enzyme catalyses acetaldehyde + NAD(+) + H2O = acetate + NADH + 2 H(+). It catalyses the reaction imidazole-4-acetaldehyde + NAD(+) + H2O = imidazole-4-acetate + NADH + 2 H(+). The catalysed reaction is acrolein + NAD(+) + H2O = acrylate + NADH + 2 H(+). It carries out the reaction (5-hydroxyindol-3-yl)acetaldehyde + NAD(+) + H2O = (5-hydroxyindol-3-yl)acetate + NADH + 2 H(+). The enzyme catalyses 3,4-dihydroxyphenylacetaldehyde + NAD(+) + H2O = 3,4-dihydroxyphenylacetate + NADH + 2 H(+). It catalyses the reaction spermine monoaldehyde + NAD(+) + H2O = N-(2-carboxyethyl)spermidine + NADH + 2 H(+). The catalysed reaction is propanal + NAD(+) + H2O = propanoate + NADH + 2 H(+). It carries out the reaction butanal + NAD(+) + H2O = butanoate + NADH + 2 H(+). The enzyme catalyses pentanal + NAD(+) + H2O = pentanoate + NADH + 2 H(+). It catalyses the reaction hexanal + NAD(+) + H2O = hexanoate + NADH + 2 H(+). It functions in the pathway amine and polyamine biosynthesis; carnitine biosynthesis. Functionally, converts gamma-trimethylaminobutyraldehyde into gamma-butyrobetaine with high efficiency (in vitro). Can catalyze the irreversible oxidation of a broad range of aldehydes to the corresponding acids in an NAD-dependent reaction, but with low efficiency. Catalyzes the oxidation of aldehydes arising from biogenic amines and polyamines. This Pongo abelii (Sumatran orangutan) protein is 4-trimethylaminobutyraldehyde dehydrogenase (ALDH9A1).